The primary structure comprises 809 residues: PiggyBac transposable element-derived protein 1 (809 aa).

The 83-residue stretch at 44–126 folds into the SCAN box domain; sequence RLRFRHFCYQ…TVLENLETGS (83 aa). Residues 170-199 are disordered; it reads CEPPQRPQGNPQEVSGPVPHGSAHLQEKNP. A Glycyl lysine isopeptide (Lys-Gly) (interchain with G-Cter in SUMO2) cross-link involves residue Lys-218. The interval 271 to 297 is disordered; it reads KQETSEEMEQSGEASGKPNRECAPQIP. Ser-360 bears the Phosphoserine mark.

In Homo sapiens (Human), this protein is PiggyBac transposable element-derived protein 1 (PGBD1).